A 678-amino-acid polypeptide reads, in one-letter code: Zinc finger translocation-associated protein (678 aa).

Disordered stretches follow at residues 1-100 (MEPG…PGRD), 174-250 (GAGG…GSRG), 333-413 (LSEL…RDHR), and 493-583 (PESP…NYQP). Low complexity predominate over residues 66-78 (PSSRARGPASSGR). The span at 79–88 (KYSDHCEARA) shows a compositional bias: basic and acidic residues. The span at 187–200 (AEEEEEEDEEEEEG) shows a compositional bias: acidic residues. A compositionally biased stretch (low complexity) spans 205 to 214 (ACPPKGSGKA). Lysine 375 is covalently cross-linked (Glycyl lysine isopeptide (Lys-Gly) (interchain with G-Cter in SUMO2)). The segment covering 493–509 (PESPSVPVAPSTASASE) has biased composition (low complexity). 2 stretches are compositionally biased toward acidic residues: residues 512 to 524 (GGAEEAEPEEEWW) and 539 to 549 (AEEEDDEDDSQ). Pro residues predominate over residues 557 to 572 (PPLPLPPPPPPPPPPP). A compositionally biased stretch (basic and acidic residues) spans 573–583 (RSREQRRNYQP).

This Mus musculus (Mouse) protein is Zinc finger translocation-associated protein.